We begin with the raw amino-acid sequence, 63 residues long: Large ribosomal subunit protein uL29 (63 aa).

The protein belongs to the universal ribosomal protein uL29 family.

This Photorhabdus laumondii subsp. laumondii (strain DSM 15139 / CIP 105565 / TT01) (Photorhabdus luminescens subsp. laumondii) protein is Large ribosomal subunit protein uL29.